Consider the following 182-residue polypeptide: DNA-directed RNA polymerase 30 kDa polypeptide (182 aa).

Residues 135-175 (STIRCVACKSNNTIPMILQTRSSDEEPTVRVVCKDCGKNFA) form a TFIIS-type zinc finger. Cys139, Cys142, Cys167, and Cys170 together coordinate Zn(2+).

Belongs to the poxviridae DNA-directed RNA polymerase 30 kDa subunit family. This enzyme consists of at least eight subunits.

The enzyme catalyses RNA(n) + a ribonucleoside 5'-triphosphate = RNA(n+1) + diphosphate. Functionally, DNA-dependent RNA polymerase catalyzes the transcription of DNA into RNA using the four ribonucleoside triphosphates as substrates. Rpo30 may have a role in RNA chain elongation. The sequence is that of DNA-directed RNA polymerase 30 kDa polypeptide (RPO30) from Fowlpox virus (strain NVSL) (FPV).